Reading from the N-terminus, the 299-residue chain is Heterodisulfide reductase subunit B-like protein (299 aa).

Belongs to the HdrB family. In terms of assembly, the heterodisulfide reductase is composed of three subunits; HdlA, HdlB and HdlC. It forms a complex with the F420-non-reducing hydrogenase (Mvh), which provides the reducing equivalents to the heterodisulfide reductase.

Its subcellular location is the cytoplasm. In terms of biological role, has oxidoreductase activity. The Hdl and Mvh subunits may together mediate electron transfer from hydrogen to an unidentified electron acceptor on the cytoplasmic side of the membrane. This Archaeoglobus profundus (strain DSM 5631 / JCM 9629 / NBRC 100127 / Av18) protein is Heterodisulfide reductase subunit B-like protein (hdlB).